The sequence spans 347 residues: Nod factor export ATP-binding protein I (347 aa).

A compositionally biased stretch (basic and acidic residues) spans 1 to 11 (MGENMEREMLR). A disordered region spans residues 1–32 (MGENMEREMLRPKTIAMDQNSASARSNPEREI). Over residues 17–26 (MDQNSASARS) the composition is skewed to polar residues. The region spanning 49–279 (IDLQAVTMIY…IIGCPVIEVY (231 aa)) is the ABC transporter domain. Residue 81-88 (GPNGAGKS) participates in ATP binding.

It belongs to the ABC transporter superfamily. Lipooligosaccharide exporter (TC 3.A.1.102) family. As to quaternary structure, the complex is composed of two ATP-binding proteins (NodI) and two transmembrane proteins (NodJ).

It localises to the cell inner membrane. In terms of biological role, part of the ABC transporter complex NodIJ involved in the export of the nodulation factors (Nod factors), the bacterial signal molecules that induce symbiosis and subsequent nodulation induction. Nod factors are LCO (lipo-chitin oligosaccharide), a modified beta-1,4-linked N-acetylglucosamine oligosaccharide. This subunit is responsible for energy coupling to the transport system. In Neorhizobium galegae (Rhizobium galegae), this protein is Nod factor export ATP-binding protein I.